The following is a 256-amino-acid chain: 5-keto-4-deoxy-D-glucarate aldolase (256 aa).

His-50 functions as the Proton acceptor in the catalytic mechanism. Residue Gln-151 participates in substrate binding. Position 153 (Glu-153) interacts with Mg(2+). Residues Ser-178 and Asp-179 each contribute to the substrate site. Residue Asp-179 coordinates Mg(2+).

It belongs to the HpcH/HpaI aldolase family. KDGluc aldolase subfamily. As to quaternary structure, homohexamer; trimer of dimers. The cofactor is Mg(2+).

It carries out the reaction 5-dehydro-4-deoxy-D-glucarate = 2-hydroxy-3-oxopropanoate + pyruvate. The enzyme catalyses 2-dehydro-3-deoxy-D-glucarate = 2-hydroxy-3-oxopropanoate + pyruvate. It functions in the pathway carbohydrate acid metabolism; galactarate degradation; D-glycerate from galactarate: step 2/3. In terms of biological role, catalyzes the reversible retro-aldol cleavage of both 5-keto-4-deoxy-D-glucarate and 2-keto-3-deoxy-D-glucarate to pyruvate and tartronic semialdehyde. The sequence is that of 5-keto-4-deoxy-D-glucarate aldolase from Shigella sonnei (strain Ss046).